Here is a 452-residue protein sequence, read N- to C-terminus: Tripartite motif-containing protein 49 (452 aa).

The RING-type zinc finger occupies 15–56 (CPLCMNYFIDPVTIDCGHSFCRPCFYLNWQDIPFLVQCSECT). The B box-type zinc finger occupies 88–129 (SEEQMCGTHRETKKIFCEVDRSLLCLLCSSSQEHRYHRHRPI). 4 residues coordinate Zn(2+): cysteine 93, histidine 96, cysteine 115, and histidine 121. A B30.2/SPRY domain is found at 269-452 (ELSAGPITGL…LRPIFCCIHF (184 aa)).

This sequence belongs to the TRIM/RBCC family. In terms of tissue distribution, preferentially expressed in testis.

The polypeptide is Tripartite motif-containing protein 49 (TRIM49) (Homo sapiens (Human)).